Consider the following 31-residue polypeptide: Cyclotide mden-L (31 aa).

Positions 1 to 31 form a cross-link, cyclopeptide (Gly-Asn); it reads GSIPCGESCVYIPCISAVLGCSCKNKVCYRN. Disulfide bonds link Cys-5/Cys-21, Cys-9/Cys-23, and Cys-14/Cys-28.

Belongs to the cyclotide family. Bracelet subfamily. Post-translationally, this is a cyclic peptide.

Probably participates in a plant defense mechanism. This Melicytus dentatus (Tree violet) protein is Cyclotide mden-L.